The following is a 395-amino-acid chain: Endophilin-B2 (395 aa).

Position 1 is an N-acetylmethionine (methionine 1). A membrane-binding amphipathic helix region spans residues 1–27 (MDFNMKKLASDAGIFFTRAVQFTEEKF). At serine 10 the chain carries Phosphoserine. The BAR domain occupies 24-287 (EEKFGQAEKT…LGRFPGTFVG (264 aa)). 2 coiled-coil regions span residues 116-132 (IKVA…ERDF) and 206-240 (ASAL…LLLE). Positions 335 to 395 (SGTRKARVLY…VPVTYLELLS (61 aa)) constitute an SH3 domain. A Phosphoserine modification is found at serine 395.

This sequence belongs to the endophilin family. In terms of assembly, homodimer, and heterodimer with SH3GLB1.

The protein localises to the cytoplasm. This chain is Endophilin-B2 (SH3GLB2), found in Bos taurus (Bovine).